The primary structure comprises 139 residues: Probable disulfide formation protein C (139 aa).

A helical transmembrane segment spans residues glutamate 8–tyrosine 27. Cysteine 37 and cysteine 40 are oxidised to a cystine. A run of 2 helical transmembrane segments spans residues tyrosine 42–lysine 61 and tyrosine 68–alanine 85. Cysteine 99 and cysteine 104 are joined by a disulfide. A helical membrane pass occupies residues glycine 113 to valine 135.

This sequence belongs to the DsbB family. BdbC subfamily.

It localises to the cell membrane. Required for disulfide bond formation in some proteins. This chain is Probable disulfide formation protein C, found in Bacillus cereus (strain ATCC 14579 / DSM 31 / CCUG 7414 / JCM 2152 / NBRC 15305 / NCIMB 9373 / NCTC 2599 / NRRL B-3711).